Reading from the N-terminus, the 91-residue chain is Acylphosphatase (91 aa).

The region spanning 5–91 (CSKFIVSGHV…EHDYQGFEIL (87 aa)) is the Acylphosphatase-like domain. Residue asparagine 38 is part of the active site.

This sequence belongs to the acylphosphatase family.

The catalysed reaction is an acyl phosphate + H2O = a carboxylate + phosphate + H(+). The protein is Acylphosphatase (acyP) of Vibrio cholerae serotype O1 (strain ATCC 39541 / Classical Ogawa 395 / O395).